Reading from the N-terminus, the 591-residue chain is V-type ATP synthase alpha chain (591 aa).

Gly233–Thr240 serves as a coordination point for ATP.

The protein belongs to the ATPase alpha/beta chains family.

It carries out the reaction ATP + H2O + 4 H(+)(in) = ADP + phosphate + 5 H(+)(out). In terms of biological role, produces ATP from ADP in the presence of a proton gradient across the membrane. The V-type alpha chain is a catalytic subunit. This Streptococcus pyogenes serotype M12 (strain MGAS2096) protein is V-type ATP synthase alpha chain.